A 215-amino-acid polypeptide reads, in one-letter code: Probable phosphoglycerate mutase GpmB (215 aa).

Residues 8–15 (RHGETQWN), 21–22 (QG), Arg-58, Arg-60, 82–85 (ELDM), 104–105 (RR), and 151–152 (GI) each bind substrate. Residue His-9 is the Tele-phosphohistidine intermediate of the active site. The active-site Proton donor/acceptor is the Glu-82.

This sequence belongs to the phosphoglycerate mutase family. GpmB subfamily.

It catalyses the reaction (2R)-2-phosphoglycerate = (2R)-3-phosphoglycerate. It participates in carbohydrate degradation; glycolysis; pyruvate from D-glyceraldehyde 3-phosphate: step 3/5. This is Probable phosphoglycerate mutase GpmB from Klebsiella pneumoniae subsp. pneumoniae (strain ATCC 700721 / MGH 78578).